The following is a 213-amino-acid chain: Nucleolar protein 12 (213 aa).

Residues 33-96 adopt a coiled-coil conformation; that stretch reads GFHKRKVERK…RLVTAKTESV (64 aa). Residues 118-213 are disordered; the sequence is ARLLGLTPPE…LTGKARHSGE (96 aa). Basic residues-rich tracts occupy residues 170–182 and 198–213; these read AHSR…KHPR and KAQR…HSGE.

This sequence belongs to the RRP17 family. Interacts with KIAA1191.

It is found in the nucleus. The protein resides in the nucleolus. The protein localises to the cytoplasm. Functionally, multifunctional RNA binding protein that plays a role in RNA metabolism and DNA maintenance. Participates in the resolution of DNA stress and the maintenance of genome integrity by localizing to sites of DNA insults. Also plays a role in proper nucleolar organization by limiting nucleolar size and regulating nucleolar number. Mechanistically, regulates the nucleolar levels of fibrillarin and nucleolin, two key players in pre-rRNA processing and ribosome assembly. This is Nucleolar protein 12 (NOL12) from Homo sapiens (Human).